A 732-amino-acid polypeptide reads, in one-letter code: MSYYYVPISSPYQIESTEYIDDFVTMLFDGSIEFINDEQRKQLKLPENYIQSVRENISLYSDRVPLYDIGSNHIFLIHRDNVYPRIYFENYRFIDQNFYNDLKNIKKPTSIDKNNLRILSHYDLSKLYTTYMKIFYDSFVVNSYITHCQRPSFFSGMEHIRPYYTINELNYLAYDWNLTNKLSLTTSEINSFCKKISQYDIPAETLLDHQMYIYDSKAIGLVKHYSLFGSYYMNYYLRKNKCCLPGEINDDMTIVRNLYLENQIEIMIRLIKNAPGFTKSHTVYRFVETDDYLKHLNIGDIYQDSSFMSTTRNPFYYKENYAFGYILIKITIPKKIKGTGLCIEAYSNFPNEEEIVLPPTTRYRLVNYMENQELENFQNVFGIVAKKKYEFEWVGNDYIDKADFEIKIDIPNSIIPKKNFVDLKELINDDNIKNLSISDRLKYFRDTYSSVNNQFVCQIGNYEYIFNFEAYNSTSVYKPFFYYEINDGIMVTTSNPKYGNINILMELGPEIHVNYYFRYSVTDPSIVVDLNRSEWIEWLSVFSYVIGSRNVVIHSNYVLQYDKSDTIKQKQMKTRYTFSQNIYLYLKNGTKFFEFDEVVPNFDYARLDYLFGYNVFDVIKPTDRDELYRITQSSGKSNMGDLYIYIIENHPKLIRSIEDKMDIVYNYNDNINPFKNISYNLDAWRYLYDHYYINHIPSEKEFTIKKGSFKKLIGSKKIVKFQNRLRTYLMSQ.

The region spanning 163-390 (YYTINELNYL…FGIVAKKKYE (228 aa)) is the TR mART core domain. Catalysis depends on residues Arg285, Ser309, and Glu354.

This is an uncharacterized protein from Acanthamoeba polyphaga mimivirus (APMV).